The following is a 157-amino-acid chain: NAD(P)H-quinone oxidoreductase subunit N (157 aa).

It belongs to the complex I NdhN subunit family. As to quaternary structure, NDH-1 can be composed of about 15 different subunits; different subcomplexes with different compositions have been identified which probably have different functions.

The protein localises to the cellular thylakoid membrane. The catalysed reaction is a plastoquinone + NADH + (n+1) H(+)(in) = a plastoquinol + NAD(+) + n H(+)(out). It catalyses the reaction a plastoquinone + NADPH + (n+1) H(+)(in) = a plastoquinol + NADP(+) + n H(+)(out). Functionally, NDH-1 shuttles electrons from an unknown electron donor, via FMN and iron-sulfur (Fe-S) centers, to quinones in the respiratory and/or the photosynthetic chain. The immediate electron acceptor for the enzyme in this species is believed to be plastoquinone. Couples the redox reaction to proton translocation, and thus conserves the redox energy in a proton gradient. Cyanobacterial NDH-1 also plays a role in inorganic carbon-concentration. This Synechococcus sp. (strain CC9902) protein is NAD(P)H-quinone oxidoreductase subunit N.